A 455-amino-acid chain; its full sequence is MAPPLLLCLILTFLWNLPEAESNVFLKSKVANRFLQRTKRSNSIFEEFKAGNIERECIEEKCSKEEAREVFEDNEKTETFWNVYVDGDQCSSNPCHYRGTCKDGIGSYTCTCLPNYEGKNCEKVLFESCRVFNGNCWHFCKSVQNEIQCSCAESYRLGDDGHSCVAEGDFSCGRNIKARNKREASLPDFVQSQKAILLKKSDNPSPDIRIINGMDCKLGECPWQAVLLDEDDDVFCGGTILSSIHVLTAAHCINQTKNISVIVGEIDISRKETIRLLPVDKVYVHTKFVPPSYLYGHQNVDRKTYDYDIAIIRMKTPIQFSENVVPACLPTADFVKQVLMKQDFGIVSGFGRTQYRGQTSNTLKVITVPYVDRRTCMLSSDFPITPNMFCAGYDTLPQDACQGDSGGPHITAYGDTHFITGINSWGEGCAKKGKYGVYTKVSNFIPWIKAIMSLK.

The N-terminal stretch at M1–A20 is a signal peptide. A propeptide spanning residues E21–R40 is cleaved from the precursor. In terms of domain architecture, Gla spans S41–D86. A 4-carboxyglutamate mark is found at E46, E47, E54, E56, E59, E60, E65, E66, E69, E72, and E75. C57 and C62 form a disulfide bridge. The EGF-like 1; calcium-binding domain maps to D86–E122. 11 disulfide bridges follow: C90–C101, C95–C110, C112–C121, C129–C140, C136–C149, C151–C164, C172–C328, C216–C221, C236–C252, C376–C390, and C401–C429. S92 is a glycosylation site (O-linked (Hex...) serine). The 36-residue stretch at C129–C164 folds into the EGF-like 2 domain. The propeptide at R182–R209 is activation peptide. Positions I210–S453 constitute a Peptidase S1 domain. The Charge relay system role is filled by H251. N254 is a glycosylation site (N-linked (GlcNAc...) asparagine). D308 serves as the catalytic Charge relay system. Residue S405 is the Charge relay system of the active site.

It belongs to the peptidase S1 family. Snake venom subfamily. As to quaternary structure, heterodimer of a light chain and a heavy chain; disulfide-linked. In terms of processing, the vitamin K-dependent, enzymatic carboxylation of some glutamate residues allows the modified protein to bind calcium. Expressed by the venom gland.

The protein resides in the secreted. It carries out the reaction Selective cleavage of Arg-|-Thr and then Arg-|-Ile bonds in prothrombin to form thrombin.. Functionally, snake prothrombin activator that attacks the hemostatic system of prey. This protein is functionally similar to blood coagulation factor Xa. The polypeptide is Venom prothrombin activator nigrarin-D (Cryptophis nigrescens (Eastern small-eyed snake)).